Consider the following 175-residue polypeptide: ATP synthase subunit b 2 (175 aa).

Residues 20–40 (LIFWTTITFVLVLIILKKIAW) form a helical membrane-spanning segment.

The protein belongs to the ATPase B chain family. As to quaternary structure, F-type ATPases have 2 components, F(1) - the catalytic core - and F(0) - the membrane proton channel. F(1) has five subunits: alpha(3), beta(3), gamma(1), delta(1), epsilon(1). F(0) has four main subunits: a(1), b(2) and c(10-14). The alpha and beta chains form an alternating ring which encloses part of the gamma chain. F(1) is attached to F(0) by a central stalk formed by the gamma and epsilon chains, while a peripheral stalk is formed by the delta and b chains.

It localises to the cell inner membrane. Its function is as follows. F(1)F(0) ATP synthase produces ATP from ADP in the presence of a proton or sodium gradient. F-type ATPases consist of two structural domains, F(1) containing the extramembraneous catalytic core and F(0) containing the membrane proton channel, linked together by a central stalk and a peripheral stalk. During catalysis, ATP synthesis in the catalytic domain of F(1) is coupled via a rotary mechanism of the central stalk subunits to proton translocation. Component of the F(0) channel, it forms part of the peripheral stalk, linking F(1) to F(0). This chain is ATP synthase subunit b 2, found in Chlorobium luteolum (strain DSM 273 / BCRC 81028 / 2530) (Pelodictyon luteolum).